Reading from the N-terminus, the 203-residue chain is Large ribosomal subunit protein bL25 (203 aa).

The disordered stretch occupies residues 1–21 (MMENLQVNQREKKTRHSSRQC). The segment covering 12–21 (KKTRHSSRQC) has biased composition (basic residues).

The protein belongs to the bacterial ribosomal protein bL25 family. CTC subfamily. In terms of assembly, part of the 50S ribosomal subunit; part of the 5S rRNA/L5/L18/L25 subcomplex. Contacts the 5S rRNA. Binds to the 5S rRNA independently of L5 and L18.

Its function is as follows. This is one of the proteins that binds to the 5S RNA in the ribosome where it forms part of the central protuberance. The sequence is that of Large ribosomal subunit protein bL25 from Clostridium perfringens (strain 13 / Type A).